The primary structure comprises 338 residues: Aspartate carbamoyltransferase catalytic subunit (338 aa).

Carbamoyl phosphate contacts are provided by Arg72 and Thr73. Lys100 is a binding site for L-aspartate. Positions 122, 152, and 155 each coordinate carbamoyl phosphate. Positions 186 and 243 each coordinate L-aspartate. Residues Gly284 and Pro285 each contribute to the carbamoyl phosphate site.

Belongs to the aspartate/ornithine carbamoyltransferase superfamily. ATCase family. As to quaternary structure, heterododecamer (2C3:3R2) of six catalytic PyrB chains organized as two trimers (C3), and six regulatory PyrI chains organized as three dimers (R2).

The enzyme catalyses carbamoyl phosphate + L-aspartate = N-carbamoyl-L-aspartate + phosphate + H(+). It participates in pyrimidine metabolism; UMP biosynthesis via de novo pathway; (S)-dihydroorotate from bicarbonate: step 2/3. Functionally, catalyzes the condensation of carbamoyl phosphate and aspartate to form carbamoyl aspartate and inorganic phosphate, the committed step in the de novo pyrimidine nucleotide biosynthesis pathway. The chain is Aspartate carbamoyltransferase catalytic subunit from Acinetobacter baumannii (strain AB307-0294).